The primary structure comprises 96 residues: Ferredoxin-1 (96 aa).

In terms of domain architecture, 2Fe-2S ferredoxin-type spans 1 to 95; sequence MKVIINGKEF…DCDEIVIESE (95 aa). Positions 34, 39, 42, and 78 each coordinate [2Fe-2S] cluster. The cysteines at positions 52 and 87 are disulfide-linked.

It belongs to the 2Fe2S plant-type ferredoxin family. The cofactor is [2Fe-2S] cluster.

Functionally, ferredoxins are iron-sulfur proteins that transfer electrons in a wide variety of metabolic reactions. In Aquifex aeolicus (strain VF5), this protein is Ferredoxin-1 (fdx1).